Reading from the N-terminus, the 711-residue chain is Polyribonucleotide nucleotidyltransferase (711 aa).

2 residues coordinate Mg(2+): D490 and D496. A KH domain is found at 557–619; the sequence is PRIETMTIPK…KCIDDAMRII (63 aa). Residues 629-699 form the S1 motif domain; sequence GEVYVGKVRS…KTGKFKLSHK (71 aa).

Belongs to the polyribonucleotide nucleotidyltransferase family. Mg(2+) is required as a cofactor.

The protein resides in the cytoplasm. It carries out the reaction RNA(n+1) + phosphate = RNA(n) + a ribonucleoside 5'-diphosphate. Its function is as follows. Involved in mRNA degradation. Catalyzes the phosphorolysis of single-stranded polyribonucleotides processively in the 3'- to 5'-direction. In Phocaeicola vulgatus (strain ATCC 8482 / DSM 1447 / JCM 5826 / CCUG 4940 / NBRC 14291 / NCTC 11154) (Bacteroides vulgatus), this protein is Polyribonucleotide nucleotidyltransferase.